The primary structure comprises 66 residues: Large ribosomal subunit protein bL33c (66 aa).

Belongs to the bacterial ribosomal protein bL33 family.

It is found in the plastid. The protein resides in the chloroplast. The protein is Large ribosomal subunit protein bL33c of Aethionema cordifolium (Lebanon stonecress).